Here is a 588-residue protein sequence, read N- to C-terminus: DELLA protein GAI (588 aa).

Residues 1–15 (MKRDRDRDREREKRA) show a composition bias toward basic and acidic residues. The disordered stretch occupies residues 1–38 (MKRDRDRDREREKRAFSNGAVSSGKSKIWEEDEEEKPD). Positions 42-46 (DELLA) match the DELLA motif motif. Residues 152–177 (GAVFNSDSNKRHRSTTSSFSTTSSSM) are disordered. The segment covering 166–177 (TTSSFSTTSSSM) has biased composition (low complexity). One can recognise a GRAS domain in the interval 190-574 (VDSQETGVRL…RPLIATSAWK (385 aa)). Positions 197-251 (VRLVHTLMACAEAVQQENLTLADQLVRHIGILAVSQSGAMRKVATYFAEALARRI) are leucine repeat I (LRI). Positions 269–334 (QMHFYETCPY…GGPPAFRLTG (66 aa)) are VHIID. The VHIID signature appears at 300–304 (VHVID). Positions 348 to 380 (QVGWKLAQLAETIGVEFEFRGFVANSLADLDAT) are leucine repeat II (LRII). The PFYRE stretch occupies residues 392–495 (VAINSVFELH…EVYLGRQICN (104 aa)). The LXXLL motif signature appears at 400–404 (LHRLL). Residues 498 to 574 (ACEGSDRVER…RPLIATSAWK (77 aa)) are SAW.

It belongs to the GRAS family. DELLA subfamily. Post-translationally, phosphorylated. Ubiquitinated. Upon GA application it is ubiquitinated, leading to its subsequent degradation. As to expression, expressed in both vegetative and reproductive tissues.

The protein localises to the nucleus. Its function is as follows. Probable transcriptional regulator that acts as a repressor of the gibberellin (GA) signaling pathway. Probably acts by participating in large multiprotein complexes that repress transcription of GA-inducible genes. Upon GA application, it is degraded by the proteasome, allowing the GA signaling pathway. Its degradation is not essential for germination. This chain is DELLA protein GAI (GAI), found in Solanum lycopersicum (Tomato).